A 184-amino-acid chain; its full sequence is ATP-dependent protease subunit HslV (184 aa).

Residue Thr8 is part of the active site. Gly165, Asp168, and Thr171 together coordinate Na(+).

It belongs to the peptidase T1B family. HslV subfamily. As to quaternary structure, a double ring-shaped homohexamer of HslV is capped on each side by a ring-shaped HslU homohexamer. The assembly of the HslU/HslV complex is dependent on binding of ATP.

The protein localises to the cytoplasm. It carries out the reaction ATP-dependent cleavage of peptide bonds with broad specificity.. Allosterically activated by HslU binding. In terms of biological role, protease subunit of a proteasome-like degradation complex believed to be a general protein degrading machinery. This chain is ATP-dependent protease subunit HslV, found in Pediococcus pentosaceus (strain ATCC 25745 / CCUG 21536 / LMG 10740 / 183-1w).